Consider the following 412-residue polypeptide: Protein translocase subunit SecY (412 aa).

Transmembrane regions (helical) follow at residues 17–37, 58–78, 117–137, 143–163, 170–190, 251–271, 293–313, 350–370, and 372–392; these read IFLTIGLLVLSRLGTFIPVPG, IFSGGGFASIGIFALGIVPYI, ALGWAAIQSLGVSFWVRPYVF, FVVQMTLALTTGSMLIMWFSE, IGNGPSLLIFINIIAGLPKLI, VMPIIFASAILVLPAYLGQVI, YLIFYFSLILFFSYFYASLII, TFLGALFLAFIAVVPSIIENI, and SISTFKGLGATSLLILVGVAI.

It belongs to the SecY/SEC61-alpha family. In terms of assembly, component of the plastid Sec protein translocase complex, which is composed of at least SecY and SecE.

The protein localises to the plastid. Its subcellular location is the chloroplast thylakoid membrane. Functionally, the central subunit of the protein translocation channel SecYE. Consists of two halves formed by TMs 1-5 and 6-10. These two domains form a lateral gate at the front which open onto the bilayer between TMs 2 and 7, and are clamped together by SecE at the back. The channel is closed by both a pore ring composed of hydrophobic SecY resides and a short helix (helix 2A) on the extracellular side of the membrane which forms a plug. The polypeptide is Protein translocase subunit SecY (Pyrenomonas salina).